A 106-amino-acid polypeptide reads, in one-letter code: UPF0235 protein OCAR_4310/OCA5_c02140 (106 aa).

This sequence belongs to the UPF0235 family.

The sequence is that of UPF0235 protein OCAR_4310/OCA5_c02140 from Afipia carboxidovorans (strain ATCC 49405 / DSM 1227 / KCTC 32145 / OM5) (Oligotropha carboxidovorans).